An 857-amino-acid polypeptide reads, in one-letter code: MKTKMMMKNTSLIFVLLFITFFFTSISYSLSLTFNGDLSDNEVRLITQRQLLYFRDEFGDRGENVDVDPSLVFENPRLRNAYIALQAWKQAILSDPNNFTTNWIGSDVCSYTGVYCAPALDNRRIRTVAGIDLNHADIAGYLPQELGLLTDLALFHINSNRFCGTVPHRFNRLKLLFELDLSNNRFAGIFPTVVLQLPSLKFLDLRFNEFEGPVPRELFSKDLDAIFINHNRFRFELPDNLGDSPVSVIVVANNHFHGCIPTSLGDMRNLEEIIFMENGFNSCLPSQIGRLKNVTVFDFSFNELVGSLPASIGGMVSMEQLNVAHNRFSGKIPATICQLPRLENFTFSYNFFTGEPPVCLGLPGFDDRRNCLPARPAQRSPGQCAAFSSLPPVDCGSFGCGRSTRPPVVVPSPPTTPSPGGSPPSPSISPSPPITVPSPPTTPSPGGSPPSPSIVPSPPSTTPSPGSPPTSPTTPTPGGSPPSSPTTPTPGGSPPSSPTTPTPGGSPPSSPTTPSPGGSPPSPSISPSPPITVPSPPSTPTSPGSPPSPSSPTPSSPIPSPPTPSTPPTPISPGQNSPPIIPSPPFTGPSPPSSPSPPLPPVIPSPPIVGPTPSSPPPSTPTPVYSPPPPSTGYPPPPPFTGYSPPSPPPPPPPTFSPSPSIPPPPPQTYSPFPPPPPPPPQTYYPPQPSPSQPPQSPIYGTPPPSPIPYLPSPPQFASPPPPAPYYYSSPQPPPPPHYSLPPPTPTYHYISPPPPPTPIHSPPPQSHPPCIEYSPPPPPTVHYNPPPPPSPAHYSPPPSPPVYYYNSPPPPPAVHYSPPPPPVIHHSQPPPPPIYEGPLPPIPGISYASPPPPPFY.

Positions 1-31 (MKTKMMMKNTSLIFVLLFITFFFTSISYSLS) are cleaved as a signal peptide. Residues 32–53 (LTFNGDLSDNEVRLITQRQLLY) form an LRR 1 repeat. Residue Asn98 is glycosylated (N-linked (GlcNAc...) asparagine). 10 LRR repeats span residues 125–149 (IRTV…LGLL), 150–172 (TDLA…RFNR), 174–197 (KLLF…VLQL), 198–221 (PSLK…LFSK), 223–244 (LDAI…LGDS), 246–267 (VSVI…LGDM), 268–291 (RNLE…IGRL), 292–315 (KNVT…IGGM), 316–339 (VSME…ICQL), and 341–362 (RLEN…CLGL). The N-linked (GlcNAc...) asparagine glycan is linked to Asn293. Asn344 carries an N-linked (GlcNAc...) asparagine glycan. 2 disordered regions span residues 406–776 (PPVV…EYSP) and 817–839 (YSPP…YEGP). Composition is skewed to pro residues over residues 408–571 (VVVP…PTPI) and 579–768 (PIIP…PQSH). The segment at 615 to 857 (SPPPSTPTPV…YASPPPPPFY (243 aa)) is contains the Ser-Pro(4) repeats.

Post-translationally, hydroxylated on proline residues in the S-P-P-P-P repeat. In terms of processing, O-glycosylated on hydroxyprolines. Expressed in roots, leaves and flowers.

Its subcellular location is the secreted. The protein localises to the cell wall. Its function is as follows. Modulates cell morphogenesis by regulating cell wall formation and assembly, and/or growth polarization. The chain is Leucine-rich repeat extensin-like protein 5 (LRX5) from Arabidopsis thaliana (Mouse-ear cress).